The following is a 146-amino-acid chain: Holo-[acyl-carrier-protein] synthase (146 aa).

2 residues coordinate Mg(2+): D9 and E63.

It belongs to the P-Pant transferase superfamily. AcpS family. Mg(2+) serves as cofactor.

The protein resides in the cytoplasm. The catalysed reaction is apo-[ACP] + CoA = holo-[ACP] + adenosine 3',5'-bisphosphate + H(+). Transfers the 4'-phosphopantetheine moiety from coenzyme A to a Ser of acyl-carrier-protein. The polypeptide is Holo-[acyl-carrier-protein] synthase (Burkholderia orbicola (strain MC0-3)).